We begin with the raw amino-acid sequence, 558 residues long: Phosphatidylserine lipase ABHD16A (558 aa).

A run of 2 helical transmembrane segments spans residues Ile-60–Phe-80 and Val-93–Leu-113. Residues Arg-114 to Leu-558 are Cytoplasmic-facing. In terms of domain architecture, AB hydrolase-1 spans Leu-281–His-406. Catalysis depends on charge relay system residues Ser-355, Asp-430, and His-507.

This sequence belongs to the AB hydrolase superfamily. ABHD16 family.

Its subcellular location is the membrane. It catalyses the reaction 1-heptadecanoyl-2-(5Z,8Z,11Z,14Z-eicosatetraenoyl)-sn-glycero-3-phosphoserine + H2O = 1-heptadecanoyl-sn-glycero-3-phosphoserine + (5Z,8Z,11Z,14Z)-eicosatetraenoate + H(+). The enzyme catalyses 1-hexadecanoyl-2-(9Z-octadecenoyl)-sn-glycero-3-phospho-L-serine + H2O = 1-hexadecanoyl-sn-glycero-3-phospho-L-serine + (9Z)-octadecenoate + H(+). It carries out the reaction 1-octadecanoyl-2-(9Z,12Z-octadecadienoyl)-sn-glycero-3-phosphoserine + H2O = 1-octadecanoyl-sn-glycero-3-phosphoserine + (9Z,12Z)-octadecadienoate + H(+). The catalysed reaction is 1-heptadecanoyl-2-(5Z,8Z,11Z,14Z-eicosatetraenoyl)-sn-glycero-3-phosphocholine + H2O = 1-heptadecanoyl-sn-glycero-3-phosphocholine + (5Z,8Z,11Z,14Z)-eicosatetraenoate + H(+). It catalyses the reaction 1-hexadecanoyl-2-(9Z-octadecenoyl)-sn-glycero-3-phosphoglycerol + H2O = 1-hexadecanoyl-sn-glycero-3-phosphoglycerol + (9Z)-octadecenoate + H(+). The enzyme catalyses 1-hexadecanoyl-2-(9Z-octadecenoyl)-sn-glycero-3-phospho-(1D-myo-inositol) + H2O = 1-hexadecanoyl-sn-glycero-3-phospho-(1D-myo-inositol) + (9Z)-octadecenoate + H(+). It carries out the reaction 1-heptadecanoyl-2-(5Z,8Z,11Z,14Z-eicosatetraenoyl)-sn-glycero-3-phosphoethanolamine + H2O = 1-heptadecanoyl-sn-glycero-3-phosphoethanolamine + (5Z,8Z,11Z,14Z)-eicosatetraenoate + H(+). The catalysed reaction is 1-hexadecanoyl-2-(9Z-octadecenoyl)-sn-glycero-3-phospho-(1'-sn-glycerol) + H2O = 1-hexadecanoyl-sn-glycero-3-phospho-(1'-sn-glycerol) + (9Z)-octadecenoate + H(+). It catalyses the reaction Hydrolyzes glycerol monoesters of long-chain fatty acids.. The enzyme catalyses 1-tetradecanoylglycerol + H2O = tetradecanoate + glycerol + H(+). It carries out the reaction 2-hexadecanoylglycerol + H2O = glycerol + hexadecanoate + H(+). The catalysed reaction is 1-(9Z-octadecenoyl)-glycerol + H2O = glycerol + (9Z)-octadecenoate + H(+). It catalyses the reaction 2-(9Z-octadecenoyl)-glycerol + H2O = glycerol + (9Z)-octadecenoate + H(+). The enzyme catalyses 2-(9Z,12Z-octadecadienoyl)-glycerol + H2O = (9Z,12Z)-octadecadienoate + glycerol + H(+). It carries out the reaction 1-(5Z,8Z,11Z,14Z-eicosatetraenoyl)-glycerol + H2O = glycerol + (5Z,8Z,11Z,14Z)-eicosatetraenoate + H(+). The catalysed reaction is 2-(5Z,8Z,11Z,14Z-eicosatetraenoyl)-glycerol + H2O = glycerol + (5Z,8Z,11Z,14Z)-eicosatetraenoate + H(+). It catalyses the reaction prostaglandin D2-1-glycerol ester + H2O = prostaglandin D2 + glycerol + H(+). The enzyme catalyses 2-glyceryl-15-deoxy-Delta(12,14)-prostaglandin J2 + H2O = 15-deoxy-Delta(12,14)-prostaglandin J2 + glycerol + H(+). It carries out the reaction 1-(9Z,12Z-octadecadienoyl)-glycerol + H2O = (9Z,12Z)-octadecadienoate + glycerol + H(+). Specifically inhibited by alpha-alkylidene-beta-lactone KC01 ((Z)-6-(2-Oxo-4-tridecyloxetan-3-ylidene)hexanamide). Functionally, phosphatidylserine (PS) lipase that mediates the hydrolysis of phosphatidylserine to generate lysophosphatidylserine (LPS). LPS constitutes a class of signaling lipids that regulates immunological and neurological processes. Has no activity towards diacylglycerol, triacylglycerol or lysophosphatidylserine lipase. Also has monoacylglycerol lipase activity, with preference for 1-(9Z,12Z-octadecadienoyl)-glycerol (1-LG) and 2-glyceryl-15-deoxy-Delta(12,14)-prostaglandin J2 (15d-PGJ(2)-G). The polypeptide is Phosphatidylserine lipase ABHD16A (Mus musculus (Mouse)).